Here is a 278-residue protein sequence, read N- to C-terminus: Pantothenate synthetase (278 aa).

Residue 28 to 35 (MGNLHAGH) participates in ATP binding. The active-site Proton donor is the His-35. Gln-59 is a binding site for (R)-pantoate. Beta-alanine is bound at residue Gln-59. 145–148 (GKKD) lines the ATP pocket. Gln-151 is a binding site for (R)-pantoate. 182–185 (LSSR) provides a ligand contact to ATP.

It belongs to the pantothenate synthetase family. As to quaternary structure, homodimer.

The protein resides in the cytoplasm. It catalyses the reaction (R)-pantoate + beta-alanine + ATP = (R)-pantothenate + AMP + diphosphate + H(+). Its pathway is cofactor biosynthesis; (R)-pantothenate biosynthesis; (R)-pantothenate from (R)-pantoate and beta-alanine: step 1/1. Catalyzes the condensation of pantoate with beta-alanine in an ATP-dependent reaction via a pantoyl-adenylate intermediate. This chain is Pantothenate synthetase, found in Methylobacillus flagellatus (strain ATCC 51484 / DSM 6875 / VKM B-1610 / KT).